A 312-amino-acid polypeptide reads, in one-letter code: DNA-directed RNA polymerase subunit alpha (312 aa).

The tract at residues 1-226 (MIEFEKPKIT…DHLNLFVDLS (226 aa)) is alpha N-terminal domain (alpha-NTD). The alpha C-terminal domain (alpha-CTD) stretch occupies residues 243-312 (TERVLDKIIE…ELGLSLKKRK (70 aa)).

It belongs to the RNA polymerase alpha chain family. As to quaternary structure, homodimer. The RNAP catalytic core consists of 2 alpha, 1 beta, 1 beta' and 1 omega subunit. When a sigma factor is associated with the core the holoenzyme is formed, which can initiate transcription.

The catalysed reaction is RNA(n) + a ribonucleoside 5'-triphosphate = RNA(n+1) + diphosphate. DNA-dependent RNA polymerase catalyzes the transcription of DNA into RNA using the four ribonucleoside triphosphates as substrates. This chain is DNA-directed RNA polymerase subunit alpha, found in Lactococcus lactis subsp. cremoris (strain MG1363).